The sequence spans 474 residues: AAA-ATPase At3g28610 (474 aa).

Residues 1–25 (MMGNMFGSSLASLFFLWATIQQIFP) form the signal peptide. 244–251 (GPPGTGKS) provides a ligand contact to ATP.

Belongs to the AAA ATPase family. BCS1 subfamily. The cofactor is Mg(2+).

The enzyme catalyses ATP + H2O = ADP + phosphate + H(+). The protein is AAA-ATPase At3g28610 of Arabidopsis thaliana (Mouse-ear cress).